The following is a 148-amino-acid chain: Nucleoside diphosphate kinase (148 aa).

Residues Lys-9, Phe-57, Arg-85, Thr-91, Arg-102, and Asn-112 each coordinate ATP. Phosphothreonine is present on Thr-91. His-115 serves as the catalytic Pros-phosphohistidine intermediate. Ser-122 carries the phosphoserine modification.

It belongs to the NDK family. In terms of assembly, homotetramer. Requires Mg(2+) as cofactor.

It is found in the cytoplasm. It carries out the reaction a 2'-deoxyribonucleoside 5'-diphosphate + ATP = a 2'-deoxyribonucleoside 5'-triphosphate + ADP. The enzyme catalyses a ribonucleoside 5'-diphosphate + ATP = a ribonucleoside 5'-triphosphate + ADP. Its function is as follows. Major role in the synthesis of nucleoside triphosphates other than ATP. The ATP gamma phosphate is transferred to the NDP beta phosphate via a ping-pong mechanism, using a phosphorylated active-site intermediate. This is Nucleoside diphosphate kinase from Bacillus licheniformis (strain ATCC 14580 / DSM 13 / JCM 2505 / CCUG 7422 / NBRC 12200 / NCIMB 9375 / NCTC 10341 / NRRL NRS-1264 / Gibson 46).